We begin with the raw amino-acid sequence, 283 residues long: Elongation factor Ts (283 aa).

The interval 80-83 is involved in Mg(2+) ion dislocation from EF-Tu; it reads TDFV.

This sequence belongs to the EF-Ts family.

The protein localises to the cytoplasm. In terms of biological role, associates with the EF-Tu.GDP complex and induces the exchange of GDP to GTP. It remains bound to the aminoacyl-tRNA.EF-Tu.GTP complex up to the GTP hydrolysis stage on the ribosome. In Haemophilus influenzae (strain 86-028NP), this protein is Elongation factor Ts.